Reading from the N-terminus, the 373-residue chain is Arabinonate dehydratase (373 aa).

Asp199, Glu225, and Glu251 together coordinate Mg(2+).

This sequence belongs to the mandelate racemase/muconate lactonizing enzyme family. Homooctamer. Mg(2+) serves as cofactor.

It catalyses the reaction D-arabinonate = 2-dehydro-3-deoxy-D-arabinonate + H2O. Inhibited by substrate levels above 8 mM. Catalyzes the dehydration of D-arabinonate to 2-keto-3-deoxy-D-arabinonate. Participates in a pentose oxidation pathway that converts D-arabinonate to 2-oxoglutarate. The chain is Arabinonate dehydratase from Saccharolobus solfataricus (strain ATCC 35092 / DSM 1617 / JCM 11322 / P2) (Sulfolobus solfataricus).